A 110-amino-acid polypeptide reads, in one-letter code: Small ribosomal subunit protein bS16 (110 aa).

The tract at residues 87–110 (ARNNPEKAVPRKERKAAAEAAAKK) is disordered.

It belongs to the bacterial ribosomal protein bS16 family.

This is Small ribosomal subunit protein bS16 from Rhodopseudomonas palustris (strain BisA53).